The sequence spans 81 residues: Photosystem I iron-sulfur center (81 aa).

4Fe-4S ferredoxin-type domains are found at residues 2–31 (AHSVKIYDTCIGCTQCVRACPTDVLEMVPW) and 39–68 (IASAPRTEDCVGCKRCESACPTDFLSVRVY). Cys11, Cys14, Cys17, Cys21, Cys48, Cys51, Cys54, and Cys58 together coordinate [4Fe-4S] cluster.

The eukaryotic PSI reaction center is composed of at least 11 subunits. The cofactor is [4Fe-4S] cluster.

The protein resides in the plastid. It localises to the chloroplast thylakoid membrane. It carries out the reaction reduced [plastocyanin] + hnu + oxidized [2Fe-2S]-[ferredoxin] = oxidized [plastocyanin] + reduced [2Fe-2S]-[ferredoxin]. Its function is as follows. Apoprotein for the two 4Fe-4S centers FA and FB of photosystem I (PSI); essential for photochemical activity. FB is the terminal electron acceptor of PSI, donating electrons to ferredoxin. The C-terminus interacts with PsaA/B/D and helps assemble the protein into the PSI complex. Required for binding of PsaD and PsaE to PSI. PSI is a plastocyanin-ferredoxin oxidoreductase, converting photonic excitation into a charge separation, which transfers an electron from the donor P700 chlorophyll pair to the spectroscopically characterized acceptors A0, A1, FX, FA and FB in turn. This is Photosystem I iron-sulfur center from Physcomitrium patens (Spreading-leaved earth moss).